Consider the following 104-residue polypeptide: Large ribosomal subunit protein uL24 (104 aa).

This sequence belongs to the universal ribosomal protein uL24 family. In terms of assembly, part of the 50S ribosomal subunit.

In terms of biological role, one of two assembly initiator proteins, it binds directly to the 5'-end of the 23S rRNA, where it nucleates assembly of the 50S subunit. One of the proteins that surrounds the polypeptide exit tunnel on the outside of the subunit. The chain is Large ribosomal subunit protein uL24 from Pseudomonas syringae pv. syringae (strain B728a).